A 196-amino-acid chain; its full sequence is Peptidyl-tRNA hydrolase (196 aa).

Tyrosine 16 provides a ligand contact to tRNA. Histidine 21 serves as the catalytic Proton acceptor. Phenylalanine 67, asparagine 69, and asparagine 115 together coordinate tRNA.

It belongs to the PTH family. Monomer.

The protein localises to the cytoplasm. It carries out the reaction an N-acyl-L-alpha-aminoacyl-tRNA + H2O = an N-acyl-L-amino acid + a tRNA + H(+). Functionally, hydrolyzes ribosome-free peptidyl-tRNAs (with 1 or more amino acids incorporated), which drop off the ribosome during protein synthesis, or as a result of ribosome stalling. Catalyzes the release of premature peptidyl moieties from peptidyl-tRNA molecules trapped in stalled 50S ribosomal subunits, and thus maintains levels of free tRNAs and 50S ribosomes. In Edwardsiella ictaluri (strain 93-146), this protein is Peptidyl-tRNA hydrolase.